The primary structure comprises 251 residues: tRNA (guanine-N(1)-)-methyltransferase (251 aa).

Residues Gly117 and 137-142 each bind S-adenosyl-L-methionine; that span reads IGDYVL.

Belongs to the RNA methyltransferase TrmD family. Homodimer.

Its subcellular location is the cytoplasm. The catalysed reaction is guanosine(37) in tRNA + S-adenosyl-L-methionine = N(1)-methylguanosine(37) in tRNA + S-adenosyl-L-homocysteine + H(+). Its function is as follows. Specifically methylates guanosine-37 in various tRNAs. The protein is tRNA (guanine-N(1)-)-methyltransferase of Haemophilus ducreyi (strain 35000HP / ATCC 700724).